The sequence spans 138 residues: Dehydratase iacD (138 aa).

The 96-residue stretch at 18–113 (GVSEEDFIEW…LKDQDVWMDN (96 aa)) folds into the EthD domain.

It belongs to the tpcK family.

Its pathway is secondary metabolite biosynthesis. In terms of biological role, dehydratase; part of the gene cluster that mediates the biosynthesis of iso-A82775C, a enylepoxycyclohexane and biosynthetic precursor of the chloropestolide anticancer natural products. Within the cluster, the prenyltransferase iacE prenylates siccayne to generate pestalodiol E, using dimethylallyl diphosphate (DMAPP) as cosubstrate. The probable oxidoreductase iacF is then involved in the epoxidation of pestalodiol F to pestalodiol F, which is further converted to pestalofone A by the short-chain dehydrogenase/reductase iacG. Iso-A82775C is subsequently generated from pestalofone A by the short-chain dehydrogenase/reductase iacC. Iso-A82775C is further condensed with maldoxin via a Diels-Alder reaction to produce the anticancer natural products chloropestolides A to E. In Pestalotiopsis fici (strain W106-1 / CGMCC3.15140), this protein is Dehydratase iacD.